The primary structure comprises 233 residues: Large ribosomal subunit protein uL1 (233 aa).

This sequence belongs to the universal ribosomal protein uL1 family. Part of the 50S ribosomal subunit.

In terms of biological role, binds directly to 23S rRNA. The L1 stalk is quite mobile in the ribosome, and is involved in E site tRNA release. Functionally, protein L1 is also a translational repressor protein, it controls the translation of the L11 operon by binding to its mRNA. This is Large ribosomal subunit protein uL1 from Shewanella loihica (strain ATCC BAA-1088 / PV-4).